The primary structure comprises 562 residues: Pyruvate kinase isozyme G, chloroplastic (562 aa).

Residue Arg121 participates in substrate binding. K(+) contacts are provided by Asn123, Ser125, Asp156, and Thr157. Position 123-126 (123-126 (NMSH)) interacts with ATP. Glu308 is a Mg(2+) binding site. Positions 331, 332, and 364 each coordinate substrate. Asp332 is a binding site for Mg(2+).

It belongs to the pyruvate kinase family. In terms of assembly, homotetramer. Requires Mg(2+) as cofactor. K(+) serves as cofactor. As to expression, highest levels in leaves. Also found in stems, roots and flowers.

The protein resides in the plastid. The protein localises to the chloroplast. The enzyme catalyses pyruvate + ATP = phosphoenolpyruvate + ADP + H(+). The protein operates within carbohydrate degradation; glycolysis; pyruvate from D-glyceraldehyde 3-phosphate: step 5/5. This Nicotiana tabacum (Common tobacco) protein is Pyruvate kinase isozyme G, chloroplastic.